A 116-amino-acid polypeptide reads, in one-letter code: Putative membrane protein insertion efficiency factor (116 aa).

It belongs to the UPF0161 family.

Its subcellular location is the cell inner membrane. In terms of biological role, could be involved in insertion of integral membrane proteins into the membrane. The sequence is that of Putative membrane protein insertion efficiency factor from Bartonella tribocorum (strain CIP 105476 / IBS 506).